Here is a 300-residue protein sequence, read N- to C-terminus: Putative S-adenosyl-L-methionine-dependent methyltransferase MMAR_1058 (300 aa).

S-adenosyl-L-methionine contacts are provided by residues Asp-127 and 156–157 (DL).

It belongs to the UPF0677 family.

Its function is as follows. Exhibits S-adenosyl-L-methionine-dependent methyltransferase activity. This Mycobacterium marinum (strain ATCC BAA-535 / M) protein is Putative S-adenosyl-L-methionine-dependent methyltransferase MMAR_1058.